Consider the following 114-residue polypeptide: Putative small ubiquitin-related modifier 4 (114 aa).

The tract at residues 1–20 (MSTTSRVGSNEVKMEGQKRK) is disordered. Positions 26 to 104 (THVTLKVKGQ…IDAMLCQQSG (79 aa)) constitute a Ubiquitin-like domain. Gly-104 is covalently cross-linked (Glycyl lysine isopeptide (Gly-Lys) (interchain with K-? in acceptor proteins)).

The protein belongs to the ubiquitin family. SUMO subfamily. In terms of assembly, interacts with SAE2, SCE1, SIZ1 and MMS21 Covalently attached to a number of proteins.

Its subcellular location is the nucleus. It is found in the cytoplasm. Ubiquitin-like protein which can be covalently attached to target lysines as a monomer. Does not seem to be involved in protein degradation and may function as an antagonist of ubiquitin in the degradation process. This chain is Putative small ubiquitin-related modifier 4 (SUMO4), found in Arabidopsis thaliana (Mouse-ear cress).